Consider the following 655-residue polypeptide: Archaeal Lon protease (655 aa).

Residues 1–123 (MEENIESVEE…KAEREKRDRS (123 aa)) lie on the Cytoplasmic side of the membrane. Residue 57 to 64 (GEPGTGKS) coordinates ATP. Residues 124–144 (RSIMFVIFSVVLLGIIAAIVL) form a helical membrane-spanning segment. Position 145 (arginine 145) is a topological domain, extracellular. A helical membrane pass occupies residues 146 to 166 (SITLIFFAIMAAAFLYMAMAF). Over 167-655 (NPVIRNEKAM…ASTRAGQNVA (489 aa)) the chain is Cytoplasmic. The 186-residue stretch at 433 to 618 (GSVVGMVNGL…EDVLKVALVN (186 aa)) folds into the Lon proteolytic domain. Active-site residues include serine 525 and lysine 568.

This sequence belongs to the peptidase S16 family. Archaeal LonB subfamily. Homohexamer. Organized in a ring with a central cavity.

It is found in the cell membrane. Functionally, ATP-dependent serine protease that mediates the selective degradation of mutant and abnormal proteins as well as certain short-lived regulatory proteins. Degrades polypeptides processively. The chain is Archaeal Lon protease from Thermoplasma volcanium (strain ATCC 51530 / DSM 4299 / JCM 9571 / NBRC 15438 / GSS1).